The following is a 918-amino-acid chain: UPF0182 protein CPR_0011 (918 aa).

The next 7 membrane-spanning stretches (helical) occupy residues 8 to 28 (TVLI…NFII), 46 to 66 (LIAI…VIAI), 91 to 111 (FLLS…TTQW), 151 to 171 (AISL…ALGF), 200 to 220 (LAVL…LKSY), 243 to 263 (IFYK…FISI), and 271 to 291 (IIIS…VAIF).

It belongs to the UPF0182 family.

It is found in the cell membrane. The protein is UPF0182 protein CPR_0011 of Clostridium perfringens (strain SM101 / Type A).